The sequence spans 226 residues: E3 ubiquitin-protein ligase RNF186 (226 aa).

Residues 39–85 (CLVCREPYNCARSPKLLSCQHTFCAVCLKLLLYVQEDTWSIPCPLCR) form an RING-type zinc finger. Helical transmembrane passes span 157-177 (HLLLLALVIVLILPFIYPGVI) and 179-199 (WVLAFVIALALLMSTLFCCHP).

In terms of assembly, interacts with BNIP1. In terms of processing, polyubiquitinated. 'Lys-29'-linked autoubiquitination leads to proteasomal degradation.

Its subcellular location is the endoplasmic reticulum membrane. The enzyme catalyses S-ubiquitinyl-[E2 ubiquitin-conjugating enzyme]-L-cysteine + [acceptor protein]-L-lysine = [E2 ubiquitin-conjugating enzyme]-L-cysteine + N(6)-ubiquitinyl-[acceptor protein]-L-lysine.. It functions in the pathway protein modification; protein ubiquitination. E3 ubiquitin protein ligase that is part of an apoptotic signaling pathway activated by endoplasmic reticulum stress. Stimulates the expression of proteins specific of the unfolded protein response (UPR), ubiquitinates BNIP1 and regulates its localization to the mitochondrion and induces calcium release from the endoplasmic reticulum that ultimately leads to cell apoptosis. Plays a role in the maintenance of intestinal homeostasis and clearance of enteric pathogens. Upon NOD2 stimulation, ubiquitinates the ER stress sensor activating transcription factor 6/ATF6 and promotes the unfolded protein response UPR. Participates in basal level of autophagy maintenance by regulating the ubiquitination of EPHB2. Upon stimulation by ligand EFNB1, ubiquitinates EPHB2 and further recruits MAP1LC3B for autophagy induction. Controls nutrient sensing by ubiquitinating Sestrin-2/SESN2, which is an intracellular sensor of cytosolic leucine and inhibitor of mTORC1 activity. The polypeptide is E3 ubiquitin-protein ligase RNF186 (Mus musculus (Mouse)).